A 426-amino-acid polypeptide reads, in one-letter code: Serine--tRNA ligase (426 aa).

T232 to E234 provides a ligand contact to L-serine. Residue R263–E265 coordinates ATP. E286 lines the L-serine pocket. Position 350 to 353 (E350 to S353) interacts with ATP. S385 contacts L-serine.

It belongs to the class-II aminoacyl-tRNA synthetase family. Type-1 seryl-tRNA synthetase subfamily. Homodimer. The tRNA molecule binds across the dimer.

Its subcellular location is the cytoplasm. The enzyme catalyses tRNA(Ser) + L-serine + ATP = L-seryl-tRNA(Ser) + AMP + diphosphate + H(+). It carries out the reaction tRNA(Sec) + L-serine + ATP = L-seryl-tRNA(Sec) + AMP + diphosphate + H(+). It functions in the pathway aminoacyl-tRNA biosynthesis; selenocysteinyl-tRNA(Sec) biosynthesis; L-seryl-tRNA(Sec) from L-serine and tRNA(Sec): step 1/1. Its function is as follows. Catalyzes the attachment of serine to tRNA(Ser). Is also able to aminoacylate tRNA(Sec) with serine, to form the misacylated tRNA L-seryl-tRNA(Sec), which will be further converted into selenocysteinyl-tRNA(Sec). This Fervidobacterium nodosum (strain ATCC 35602 / DSM 5306 / Rt17-B1) protein is Serine--tRNA ligase.